The following is a 188-amino-acid chain: NADH-quinone oxidoreductase subunit I 2 (188 aa).

4Fe-4S ferredoxin-type domains are found at residues 56–88 and 98–127; these read HFLK…VVPY and AKFE…LGQQ. Residues Cys68, Cys71, Cys74, Cys78, Cys107, Cys110, Cys113, and Cys117 each coordinate [4Fe-4S] cluster.

This sequence belongs to the complex I 23 kDa subunit family. As to quaternary structure, NDH-1 is composed of 14 different subunits. Subunits NuoA, H, J, K, L, M, N constitute the membrane sector of the complex. The cofactor is [4Fe-4S] cluster.

The protein resides in the cell inner membrane. The enzyme catalyses a quinone + NADH + 5 H(+)(in) = a quinol + NAD(+) + 4 H(+)(out). Its function is as follows. NDH-1 shuttles electrons from NADH, via FMN and iron-sulfur (Fe-S) centers, to quinones in the respiratory chain. The immediate electron acceptor for the enzyme in this species is believed to be ubiquinone. Couples the redox reaction to proton translocation (for every two electrons transferred, four hydrogen ions are translocated across the cytoplasmic membrane), and thus conserves the redox energy in a proton gradient. This Rhizobium meliloti (strain 1021) (Ensifer meliloti) protein is NADH-quinone oxidoreductase subunit I 2.